The following is a 397-amino-acid chain: Keratinocyte differentiation factor 1 (397 aa).

Positions 1–16 (MPRPGQPRPSSGPPRL) are enriched in pro residues. 3 disordered regions span residues 1–67 (MPRP…SAEP), 124–158 (EAAW…MGSS), and 191–214 (PLAD…RGSE). Residues 44-55 (RPDPKDPGHHGP) are compositionally biased toward basic and acidic residues. Over residues 201–211 (SLPSTFTSSPR) the composition is skewed to polar residues. A Phosphoserine modification is found at Ser218. Disordered regions lie at residues 304-339 (ISTR…TMVG) and 361-392 (ARKL…GAPL). Residues 321 to 330 (ARSTAPAAAP) are compositionally biased toward low complexity. Polar residues predominate over residues 375-388 (SQDSSFQGTDTDSS).

The protein resides in the cytoplasm. It is found in the cell junction. Functionally, plays a role in the regulation of the epidermis formation during early development. Required both as an inhibitor of basal cell proliferation and a promoter of differentiation of basal progenitor cell progeny. The polypeptide is Keratinocyte differentiation factor 1 (Kdf1) (Rattus norvegicus (Rat)).